The primary structure comprises 218 residues: Adenylate kinase (218 aa).

10–15 (GAGKGT) is an ATP binding site. Residues 30–59 (STGDMLRAAVKAGTPLGIEAKKVMDSGGLV) are NMP. AMP contacts are provided by residues threonine 31, arginine 36, 57–59 (GLV), 85–88 (GFPR), and glutamine 92. The segment at 122–159 (GRRSHSASGRTYHVKYNPPKVEGLDDVTGEPLIQREDD) is LID. ATP is bound by residues arginine 123 and 132–133 (TY). AMP-binding residues include arginine 156 and arginine 167. Residue glycine 203 participates in ATP binding.

Belongs to the adenylate kinase family. Monomer.

The protein resides in the cytoplasm. It catalyses the reaction AMP + ATP = 2 ADP. Its pathway is purine metabolism; AMP biosynthesis via salvage pathway; AMP from ADP: step 1/1. Functionally, catalyzes the reversible transfer of the terminal phosphate group between ATP and AMP. Plays an important role in cellular energy homeostasis and in adenine nucleotide metabolism. The protein is Adenylate kinase of Polaromonas naphthalenivorans (strain CJ2).